A 55-amino-acid polypeptide reads, in one-letter code: Large ribosomal subunit protein bL32 (55 aa).

The segment covering Met-1 to Gln-19 has biased composition (basic residues). The disordered stretch occupies residues Met-1–Trp-20.

Belongs to the bacterial ribosomal protein bL32 family.

The polypeptide is Large ribosomal subunit protein bL32 (Corynebacterium jeikeium (strain K411)).